The following is a 309-amino-acid chain: Malate dehydrogenase (309 aa).

NAD(+)-binding positions include glycine 8–glycine 13 and aspartate 33. Substrate is bound by residues arginine 82 and arginine 88. Residues asparagine 95 and valine 118–asparagine 120 contribute to the NAD(+) site. Asparagine 120 and arginine 151 together coordinate substrate. Residue histidine 175 is the Proton acceptor of the active site.

Belongs to the LDH/MDH superfamily. MDH type 3 family.

It carries out the reaction (S)-malate + NAD(+) = oxaloacetate + NADH + H(+). In terms of biological role, catalyzes the reversible oxidation of malate to oxaloacetate. This chain is Malate dehydrogenase, found in Pseudomonas putida (strain GB-1).